The following is a 193-amino-acid chain: Large ribosomal subunit protein uL5 (193 aa).

Belongs to the universal ribosomal protein uL5 family. As to quaternary structure, part of the 50S ribosomal subunit; part of the 5S rRNA/L5/L18/L25 subcomplex. Contacts the 5S rRNA and the P site tRNA. Forms a bridge to the 30S subunit in the 70S ribosome.

In terms of biological role, this is one of the proteins that bind and probably mediate the attachment of the 5S RNA into the large ribosomal subunit, where it forms part of the central protuberance. In the 70S ribosome it contacts protein S13 of the 30S subunit (bridge B1b), connecting the 2 subunits; this bridge is implicated in subunit movement. Contacts the P site tRNA; the 5S rRNA and some of its associated proteins might help stabilize positioning of ribosome-bound tRNAs. This Rhizorhabdus wittichii (strain DSM 6014 / CCUG 31198 / JCM 15750 / NBRC 105917 / EY 4224 / RW1) (Sphingomonas wittichii) protein is Large ribosomal subunit protein uL5.